Here is a 135-residue protein sequence, read N- to C-terminus: Ribonuclease P protein component (135 aa).

A disordered region spans residues 115–135 (TNETVSPVSDTPLPQHERGSQ).

It belongs to the RnpA family. In terms of assembly, consists of a catalytic RNA component (M1 or rnpB) and a protein subunit.

It catalyses the reaction Endonucleolytic cleavage of RNA, removing 5'-extranucleotides from tRNA precursor.. Functionally, RNaseP catalyzes the removal of the 5'-leader sequence from pre-tRNA to produce the mature 5'-terminus. It can also cleave other RNA substrates such as 4.5S RNA. The protein component plays an auxiliary but essential role in vivo by binding to the 5'-leader sequence and broadening the substrate specificity of the ribozyme. This chain is Ribonuclease P protein component, found in Chloroflexus aurantiacus (strain ATCC 29366 / DSM 635 / J-10-fl).